We begin with the raw amino-acid sequence, 955 residues long: Outer capsid protein VP2 (955 aa).

It belongs to the orbivirus VP2 family.

It localises to the virion. The VP2 protein is one of the two proteins (with VP5) which constitute the virus particle outer capsid. It is the major target of the host immunogenic response. Responsible for viral attachment to target host cell, probably by binding to sialic acid. This attachment induces virion internalization predominantly through clathrin-dependent endocytosis. This is Outer capsid protein VP2 (Segment-2) from Antilocapra americana (Pronghorn).